We begin with the raw amino-acid sequence, 315 residues long: MNPNFLDFEQPIADLQAKIEELRLVGNDNSLNIGDEISRLQDKSKTLTESIFGNLTSWQIARMARHPRRPYTLDYIENIFTEFDELHGDRHFSDDAAIVGGIARLDNQPVMIIGHQKGREVREKVRRNFGMPRPEGYRKACRLMEMAERFKMPILTFIDTPGAYPGIDAEERNQSEAIAWNLRVMARLKTPIIATVIGEGGSGGALAIGVCDQLNMLQYSTYAVISPEGCASILWKTAEKAPDAAEAMGITADRLKGLGIVDKVIAEPLGGAHRDPVAAAALIREELSSQLAMLKAFDNDALLARRYDRLMSYGL.

A CoA carboxyltransferase C-terminal domain is found at 40–293 (LQDKSKTLTE…REELSSQLAM (254 aa)).

This sequence belongs to the AccA family. Acetyl-CoA carboxylase is a heterohexamer composed of biotin carboxyl carrier protein (AccB), biotin carboxylase (AccC) and two subunits each of ACCase subunit alpha (AccA) and ACCase subunit beta (AccD).

Its subcellular location is the cytoplasm. It carries out the reaction N(6)-carboxybiotinyl-L-lysyl-[protein] + acetyl-CoA = N(6)-biotinyl-L-lysyl-[protein] + malonyl-CoA. Its pathway is lipid metabolism; malonyl-CoA biosynthesis; malonyl-CoA from acetyl-CoA: step 1/1. Its function is as follows. Component of the acetyl coenzyme A carboxylase (ACC) complex. First, biotin carboxylase catalyzes the carboxylation of biotin on its carrier protein (BCCP) and then the CO(2) group is transferred by the carboxyltransferase to acetyl-CoA to form malonyl-CoA. The chain is Acetyl-coenzyme A carboxylase carboxyl transferase subunit alpha from Pseudomonas syringae pv. tomato (strain ATCC BAA-871 / DC3000).